We begin with the raw amino-acid sequence, 478 residues long: Sodium-coupled neutral amino acid transporter 5 (478 aa).

The interval 1-20 is disordered; sequence MAISSAEGMELQDPKMNGAL. Residues 1–57 are Cytoplasmic-facing; that stretch reads MAISSAEGMELQDPKMNGALPGNAVEQEHEGFLPSHSPSPGRKPAQFMDFEGKTSFG. The helical transmembrane segment at 58–80 threads the bilayer; that stretch reads MSVFNLSNAIMGSGILGLAYAMA. Over 81–93 the chain is Extracellular; sequence HTGILLFLALLLC. The helical transmembrane segment at 94–114 threads the bilayer; that stretch reads IALLSSYSIHLLLTCAGVVGI. At 115-131 the chain is on the cytoplasmic side; sequence RAYEQLGQRALGPAGKV. The chain crosses the membrane as a helical span at residues 132–152; the sequence is VVAAVICLHNVGAMSSYLFII. At 153–172 the chain is on the extracellular side; the sequence is KSELPLVIATFLDMDPEGDW. A helical transmembrane segment spans residues 173–193; sequence FLKGNLLIIIVSVLIILPLAL. At 194 to 198 the chain is on the cytoplasmic side; it reads MRHLG. A helical membrane pass occupies residues 199 to 219; that stretch reads YLGYTSGLSLTCMLFFLISVI. Over 220 to 263 the chain is Extracellular; sequence YKKFQLGCTVGHNGTAVESKSSPSLPIHGLNTSCEAQMFTADSQ. An intrachain disulfide couples cysteine 227 to cysteine 253. An N-linked (GlcNAc...) asparagine glycan is attached at asparagine 232. A helical transmembrane segment spans residues 264-284; the sequence is MFYTVPIMAFAFVCHPEVLPI. The Cytoplasmic segment spans residues 285–301; that stretch reads YTELCRPSKRRMQAVAN. Residues 302–322 form a helical membrane-spanning segment; that stretch reads VSIGAMFCMYGLTATFGYLTF. At 323 to 340 the chain is on the extracellular side; it reads YSSVEAEMLHMYSQHDLL. Residues 341 to 361 traverse the membrane as a helical segment; it reads ILCVRLAVLLAVTLTVPVVLF. Residues 362–382 are Cytoplasmic-facing; sequence PIRRALQQLLFPSKAFSWPRH. A helical membrane pass occupies residues 383–403; that stretch reads VAIALILLVLVNVLVICVPTI. Over 404–405 the chain is Extracellular; sequence RD. A helical transmembrane segment spans residues 406 to 426; it reads IFGVIGSTSAPSLIFILPSIF. Topologically, residues 427–445 are cytoplasmic; it reads YLRIVPSEVEPLYSWPKIQ. A helical membrane pass occupies residues 446-466; it reads ALCFGVLGVLFMAISLGFMFA. The Extracellular segment spans residues 467-478; the sequence is NWATGQSHVSGH.

This sequence belongs to the amino acid/polyamine transporter 2 family.

The protein localises to the cell membrane. The enzyme catalyses L-serine(out) + Na(+)(out) + H(+)(in) = L-serine(in) + Na(+)(in) + H(+)(out). It catalyses the reaction L-alanine(out) + Na(+)(out) + H(+)(in) = L-alanine(in) + Na(+)(in) + H(+)(out). The catalysed reaction is glycine(out) + Na(+)(out) + H(+)(in) = glycine(in) + Na(+)(in) + H(+)(out). It carries out the reaction L-glutamine(out) + Na(+)(out) + H(+)(in) = L-glutamine(in) + Na(+)(in) + H(+)(out). The enzyme catalyses L-asparagine(out) + Na(+)(out) + H(+)(in) = L-asparagine(in) + Na(+)(in) + H(+)(out). It catalyses the reaction L-histidine(out) + Na(+)(out) + H(+)(in) = L-histidine(in) + Na(+)(in) + H(+)(out). The catalysed reaction is L-cysteine(out) + Na(+)(out) + H(+)(in) = L-cysteine(in) + Na(+)(in) + H(+)(out). With respect to regulation, not inhibited by lithium. Partial allosteric regulation on ions sodium binding. In terms of biological role, symporter that cotransports neutral amino acids and sodium ions, coupled to an H(+) antiporter activity. Releases L-glutamine and glycine from astroglial cells and may participate in the glutamate/GABA-glutamine cycle and the NMDA receptors activation. In addition contributes significantly to L-glutamine uptake in retina, namely in ganglion and Mueller cells and, therefore participates in the retinal glutamate-glutamine cycle. The transport activity is pH sensitive, Li(+) tolerant, bidirectional and associated with large uncoupled fluxes of protons. The transport is electroneutral coupled to the cotransport of 1 Na(+) and the antiport of 1 H(+). May have particular importance for modulation of net hepatic glutamine flux. The protein is Sodium-coupled neutral amino acid transporter 5 of Bos taurus (Bovine).